The primary structure comprises 602 residues: Isocitrate dehydrogenase kinase/phosphatase (602 aa).

ATP contacts are provided by residues 327–333 and Lys348; that span reads APGIKGM. Residue Asp383 is part of the active site.

This sequence belongs to the AceK family.

The protein localises to the cytoplasm. The enzyme catalyses L-seryl-[isocitrate dehydrogenase] + ATP = O-phospho-L-seryl-[isocitrate dehydrogenase] + ADP + H(+). Bifunctional enzyme which can phosphorylate or dephosphorylate isocitrate dehydrogenase (IDH) on a specific serine residue. This is a regulatory mechanism which enables bacteria to bypass the Krebs cycle via the glyoxylate shunt in response to the source of carbon. When bacteria are grown on glucose, IDH is fully active and unphosphorylated, but when grown on acetate or ethanol, the activity of IDH declines drastically concomitant with its phosphorylation. In Paraburkholderia phymatum (strain DSM 17167 / CIP 108236 / LMG 21445 / STM815) (Burkholderia phymatum), this protein is Isocitrate dehydrogenase kinase/phosphatase.